Consider the following 643-residue polypeptide: Hepatoma-derived growth factor-related protein 2 (643 aa).

The 58-residue stretch at 7–64 folds into the PWWP domain; it reads PGDLVFAKMKGYPHWPARIDDVKDGAVKPPPNKYPIFFYGTHETAFLAPKDLFPYEKC. Disordered stretches follow at residues 88-450 and 548-643; these read PQAS…KKPE and LESQ…NQTS. Low complexity predominate over residues 90-104; that stretch reads ASYSLPPASVSSSDS. Residues 107–116 are compositionally biased toward basic and acidic residues; it reads PEEKSTARSD. Over residues 176–187 the composition is skewed to acidic residues; that stretch reads SEEENSDSDQDF. The segment covering 194–204 has biased composition (polar residues); sequence PRIQRRTTNLG. Basic and acidic residues predominate over residues 209–231; it reads IFAESDSKSDESEDEKKEEEQKK. A compositionally biased stretch (low complexity) spans 232 to 249; sequence SPSSSSASSPSLSSSDSE. 3 stretches are compositionally biased toward basic and acidic residues: residues 290–353, 373–382, and 417–450; these read SVDR…DSSK, EDKKPVKEVK, and RPSE…KKPE. A coiled-coil region spans residues 295–345; sequence SEWKKRDEERRRELEERRKKEQEEQLRRLREEEREEEERKKREKAEKGDKS. Positions 549–559 are enriched in polar residues; sequence ESQQKTVQKVN. Composition is skewed to basic and acidic residues over residues 560–575 and 608–622; these read TAEK…GKVE and NKTE…HAEH.

The protein belongs to the HDGF family.

It localises to the nucleus. The protein resides in the cytoplasm. Its function is as follows. May act as a regulator of myogenesis. Promotes the repair of DNA double-strand breaks (DSBs) through the homologous recombination pathway by facilitating the recruitment of the DNA endonuclease RBBP8 to the DSBs. This Xenopus tropicalis (Western clawed frog) protein is Hepatoma-derived growth factor-related protein 2 (hdgfl2).